The chain runs to 374 residues: MKPFEYGDEEIGSREIGFAVSSTIIGIGALSMPRDIANQTLFSDGWIILLLGGLICAVLGWFVTRVAILFPKQNFVQYTSAHLTKPVAYTISSILVLTFAALTAYESRMISVISQTYLFSDTPIQLLSFFFLLVVIYGIAGSRAALLRLNVLFLPIVLIAIVLLSLLNINLMEINNLLPAFQTKVSQYAVGVKNSIFTFIGFEVALFYAVLLNNKTAKKAPMAVAKAVMVNVLSYILIYVTCISVFTYMTTRGLTYPTIELGKEIEIGGGFLERFDAIFFTTWIITIYNTTAMYYDVASLLFCAMFPKVKKQIFIFISAPIIFMVNMIPSSLNTLSSYGTYLAWIDMGCVVLAPLLVLIVYKIKRRNGGNETPS.

Transmembrane regions (helical) follow at residues 16 to 36 (IGFAVSSTIIGIGALSMPRDI), 44 to 64 (DGWIILLLGGLICAVLGWFVT), 86 to 106 (PVAYTISSILVLTFAALTAYE), 122 to 142 (TPIQLLSFFFLLVVIYGIAGS), 149 to 169 (LNVLFLPIVLIAIVLLSLLNI), 192 to 212 (VKNSIFTFIGFEVALFYAVLL), 227 to 247 (AVMVNVLSYILIYVTCISVFT), 279 to 301 (FFTTWIITIYNTTAMYYDVASLL), 313 to 333 (IFIFISAPIIFMVNMIPSSLN), and 341 to 361 (YLAWIDMGCVVLAPLLVLIVY).

It belongs to the amino acid-polyamine-organocation (APC) superfamily. Spore germination protein (SGP) (TC 2.A.3.9) family.

It localises to the membrane. Functionally, contributes to the L-alanine germination response. This is Spore germination protein GerLB (gerLB) from Bacillus cereus.